The chain runs to 477 residues: D(1B) dopamine receptor (477 aa).

The Extracellular segment spans residues 1–39 (MLPPGSNGTAYPGQFALYQQLAQGNAVGGSAGAPPLGPS). The N-linked (GlcNAc...) asparagine glycan is linked to N7. Residues 40 to 66 (QVVTACLLTLLIIWTLLGNVLVCAAIV) traverse the membrane as a helical segment. Residues 67–77 (RSRHLRANMTN) lie on the Cytoplasmic side of the membrane. Residues 78–104 (VFIVSLAVSDLFVALLVMPWKAVAEVA) traverse the membrane as a helical segment. The Extracellular segment spans residues 105-114 (GYWPFGAFCD). C113 and C217 are oxidised to a cystine. A helical transmembrane segment spans residues 115-136 (VWVAFDIMCSTASILNLCVISV). Residues 137-158 (DRYWAISRPFRYKRKMTQRMAL) lie on the Cytoplasmic side of the membrane. Residues 159–180 (VMVGLAWTLSILISFIPVQLNW) form a helical membrane-spanning segment. The Extracellular portion of the chain corresponds to 181 to 223 (HRDQAASWGGLDLPNNLANWTPWEEDFWEPDVNAENCDSSLNR). N222 carries N-linked (GlcNAc...) asparagine glycosylation. Residues 224-246 (TYAISSSLISFYIPVAIMIVTYT) form a helical membrane-spanning segment. Over 247–296 (RIYRIAQVQIRRISSLERAAEHAQSCRSSAACAPDTSLRASIKKETKVLK) the chain is Cytoplasmic. A helical transmembrane segment spans residues 297–320 (TLSVIMGVFVCCWLPFFILNCMVP). Residues 321-340 (FCSGHPEGPPAGFPCVSETT) are Extracellular-facing. Residues 341–360 (FDVFVWFGWANSSLNPVIYA) traverse the membrane as a helical segment. Over 361-477 (FNADFQKVFA…ITPFTPNGFH (117 aa)) the chain is Cytoplasmic. C375 carries S-palmitoyl cysteine lipidation.

This sequence belongs to the G-protein coupled receptor 1 family. Neuron-specific, localized primarily within limbic regions of the brain.

The protein resides in the cell membrane. Its function is as follows. Dopamine receptor whose activity is mediated by G proteins which activate adenylyl cyclase. In Homo sapiens (Human), this protein is D(1B) dopamine receptor (DRD5).